A 118-amino-acid polypeptide reads, in one-letter code: MIVGHGIDLQDISAIEKVYLRNARFARKVLTDKELALFEQFSHHRKMTYLAGRWAGKEAFSKAMGTGIGQLTFQDIEIINDSKGRPVITKSPFQGKAFISISHSGGYVQASVILEDLA.

Mg(2+) contacts are provided by Asp-8 and Glu-58.

Belongs to the P-Pant transferase superfamily. AcpS family. The cofactor is Mg(2+).

It localises to the cytoplasm. It catalyses the reaction apo-[ACP] + CoA = holo-[ACP] + adenosine 3',5'-bisphosphate + H(+). Transfers the 4'-phosphopantetheine moiety from coenzyme A to a Ser of acyl-carrier-protein. In Streptococcus equi subsp. zooepidemicus (strain H70), this protein is Holo-[acyl-carrier-protein] synthase.